Here is a 278-residue protein sequence, read N- to C-terminus: Tryptophan synthase alpha chain (278 aa).

Active-site proton acceptor residues include Glu-50 and Asp-61.

The protein belongs to the TrpA family. Tetramer of two alpha and two beta chains.

The catalysed reaction is (1S,2R)-1-C-(indol-3-yl)glycerol 3-phosphate + L-serine = D-glyceraldehyde 3-phosphate + L-tryptophan + H2O. The protein operates within amino-acid biosynthesis; L-tryptophan biosynthesis; L-tryptophan from chorismate: step 5/5. In terms of biological role, the alpha subunit is responsible for the aldol cleavage of indoleglycerol phosphate to indole and glyceraldehyde 3-phosphate. The sequence is that of Tryptophan synthase alpha chain from Methylorubrum populi (strain ATCC BAA-705 / NCIMB 13946 / BJ001) (Methylobacterium populi).